The chain runs to 814 residues: Acyl-coenzyme A dehydrogenase (814 aa).

The active-site Proton acceptor is the E497.

The protein belongs to the acyl-CoA dehydrogenase family. It depends on FAD as a cofactor.

The catalysed reaction is a medium-chain 2,3-saturated fatty acyl-CoA + oxidized [electron-transfer flavoprotein] + H(+) = a medium-chain (2E)-enoyl-CoA + reduced [electron-transfer flavoprotein]. It carries out the reaction a long-chain 2,3-saturated fatty acyl-CoA + oxidized [electron-transfer flavoprotein] + H(+) = a long-chain (2E)-enoyl-CoA + reduced [electron-transfer flavoprotein]. It participates in lipid metabolism; fatty acid beta-oxidation. In terms of biological role, catalyzes the dehydrogenation of acyl-coenzymes A (acyl-CoAs) to 2-enoyl-CoAs, the first step of the beta-oxidation cycle of fatty acid degradation. Is required for the utilization of medium- and long-chain fatty acids as sole carbon sources for growth. In Escherichia coli O157:H7, this protein is Acyl-coenzyme A dehydrogenase (fadE).